A 205-amino-acid chain; its full sequence is Imidazoleglycerol-phosphate dehydratase (205 aa).

Belongs to the imidazoleglycerol-phosphate dehydratase family.

Its subcellular location is the cytoplasm. The catalysed reaction is D-erythro-1-(imidazol-4-yl)glycerol 3-phosphate = 3-(imidazol-4-yl)-2-oxopropyl phosphate + H2O. The protein operates within amino-acid biosynthesis; L-histidine biosynthesis; L-histidine from 5-phospho-alpha-D-ribose 1-diphosphate: step 6/9. The protein is Imidazoleglycerol-phosphate dehydratase of Chloroflexus aurantiacus (strain ATCC 29366 / DSM 635 / J-10-fl).